Reading from the N-terminus, the 789-residue chain is Protein FLOWERING LOCUS D (789 aa).

The interval 1-23 (MVSFSAPKKRRRGRSQRSMSSLN) is disordered. An SWIRM domain is found at 76–177 (NKEATTEALL…FGIAQAIKDK (102 aa)). Residues Ser195, Glu214, Arg216, Arg222, and 240–243 (GGSV) each bind FAD. Residue Lys287 forms a Glycyl lysine isopeptide (Lys-Gly) (interchain with G-Cter in SUMO) linkage. FAD-binding positions include Glu595, 604 to 605 (TM), and 607 to 612 (GAFVTG). Glycyl lysine isopeptide (Lys-Gly) (interchain with G-Cter in SUMO) cross-links involve residues Lys693 and Lys770.

It belongs to the flavin monoamine oxidase family. In terms of assembly, interacts with HDA6. It depends on FAD as a cofactor. Post-translationally, sumoylated at Lys-287, Lys-693 and Lys-770 by SIZ1. Sumoylation alters its activity and the histone H4 acetylation status of FLC locus, promoting FLC expression.

Probable histone demethylase that promotes flowering independently of the photoperiod and vernalization pathways by repressing FLOWERING LOCUS C (FLC), a floral repressor that blocks the transition from vegetative to reproductive development. Probably mediates histone H3 'Lys-4' demethylation at FLC locus. Seems to act in partial redundancy with LDL1 and LDL2 to repress FLC expression. Required for histone H4 deacetylation of FLC locus. May be a component of the histone deacetylase complex. Forms a histone deacetylase complex with HDA5, HDA6 and MSI4/FVE that represses FLC gene expression to control flowering time. Required for systemic acquired resistance (SAR) toward pathogenic bacteria (e.g. Pseudomonas syringae pv tomato DC3000 (avrPto)). Together with FLD and MSI4/FVE, contributes to dehydroabietinal-dependent (DA, a diterpenoid tricyclic diterpene) activation of flowering ans SAR. This chain is Protein FLOWERING LOCUS D, found in Arabidopsis thaliana (Mouse-ear cress).